An 850-amino-acid polypeptide reads, in one-letter code: PH domain-containing protein YHR131C (850 aa).

The 113-residue stretch at 194-306 (RIHSDLVHRS…MYLSIGISVS (113 aa)) folds into the PH domain. Positions 324 to 338 (RRRRRRRRRRRRHTH) are enriched in basic residues. Disordered regions lie at residues 324–348 (RRRR…GSFS), 406–428 (SAAS…SGCS), 451–494 (SSRT…GVPV), 583–659 (EASI…TDDS), and 793–850 (TTKD…QITA). Low complexity predominate over residues 406 to 416 (SAASGESSDNS). The segment covering 417–428 (TLGSTRSLSGCS) has biased composition (polar residues). Over residues 479-489 (HHESSGGDHPE) the composition is skewed to basic and acidic residues. Positions 605–619 (ESATDLSQSSRSLCL) are enriched in polar residues. 2 stretches are compositionally biased toward acidic residues: residues 626-658 (INDD…DTDD) and 799-850 (DHGE…QITA).

Its subcellular location is the cytoplasm. The sequence is that of PH domain-containing protein YHR131C from Saccharomyces cerevisiae (strain ATCC 204508 / S288c) (Baker's yeast).